We begin with the raw amino-acid sequence, 316 residues long: Ribosomal RNA small subunit methyltransferase H (316 aa).

Residues 35-37 (AGH), Asp-55, Phe-84, Asp-105, and Gln-112 each bind S-adenosyl-L-methionine.

It belongs to the methyltransferase superfamily. RsmH family.

It is found in the cytoplasm. It carries out the reaction cytidine(1402) in 16S rRNA + S-adenosyl-L-methionine = N(4)-methylcytidine(1402) in 16S rRNA + S-adenosyl-L-homocysteine + H(+). Its function is as follows. Specifically methylates the N4 position of cytidine in position 1402 (C1402) of 16S rRNA. This Streptococcus pneumoniae (strain JJA) protein is Ribosomal RNA small subunit methyltransferase H.